Here is a 216-residue protein sequence, read N- to C-terminus: Uracil phosphoribosyltransferase (216 aa).

Residues Arg-85, Arg-110, and 135–143 each bind 5-phospho-alpha-D-ribose 1-diphosphate; that span reads DPMVATGYS. Residues Ile-200 and 205–207 contribute to the uracil site; that span reads GDA. Asp-206 is a binding site for 5-phospho-alpha-D-ribose 1-diphosphate.

The protein belongs to the UPRTase family. Mg(2+) is required as a cofactor.

The catalysed reaction is UMP + diphosphate = 5-phospho-alpha-D-ribose 1-diphosphate + uracil. It functions in the pathway pyrimidine metabolism; UMP biosynthesis via salvage pathway; UMP from uracil: step 1/1. With respect to regulation, allosterically activated by GTP. In terms of biological role, catalyzes the conversion of uracil and 5-phospho-alpha-D-ribose 1-diphosphate (PRPP) to UMP and diphosphate. The protein is Uracil phosphoribosyltransferase of Burkholderia vietnamiensis (strain G4 / LMG 22486) (Burkholderia cepacia (strain R1808)).